A 493-amino-acid polypeptide reads, in one-letter code: Cysteine--tRNA ligase (493 aa).

Residue Cys-29 participates in Zn(2+) binding. A 'HIGH' region motif is present at residues 31-41 (VTVYDLCHLGH). The segment at 154-179 (KLSGRDPDDQQQGASGRTADGEESRK) is disordered. Residues Cys-213, His-238, and Glu-242 each coordinate Zn(2+). A 'KMSKS' region motif is present at residues 270–274 (KMSKS). Position 273 (Lys-273) interacts with ATP.

It belongs to the class-I aminoacyl-tRNA synthetase family. In terms of assembly, monomer. It depends on Zn(2+) as a cofactor.

It localises to the cytoplasm. It catalyses the reaction tRNA(Cys) + L-cysteine + ATP = L-cysteinyl-tRNA(Cys) + AMP + diphosphate. In Synechococcus sp. (strain CC9605), this protein is Cysteine--tRNA ligase.